A 174-amino-acid chain; its full sequence is NADH-quinone oxidoreductase subunit B 2 (174 aa).

[4Fe-4S] cluster is bound by residues Cys53, Cys54, Cys118, and Cys148.

The protein belongs to the complex I 20 kDa subunit family. As to quaternary structure, NDH-1 is composed of 14 different subunits. Subunits NuoB, C, D, E, F, and G constitute the peripheral sector of the complex. [4Fe-4S] cluster is required as a cofactor.

Its subcellular location is the cell inner membrane. It catalyses the reaction a quinone + NADH + 5 H(+)(in) = a quinol + NAD(+) + 4 H(+)(out). Its function is as follows. NDH-1 shuttles electrons from NADH, via FMN and iron-sulfur (Fe-S) centers, to quinones in the respiratory chain. Couples the redox reaction to proton translocation (for every two electrons transferred, four hydrogen ions are translocated across the cytoplasmic membrane), and thus conserves the redox energy in a proton gradient. In Cereibacter sphaeroides (strain ATCC 17025 / ATH 2.4.3) (Rhodobacter sphaeroides), this protein is NADH-quinone oxidoreductase subunit B 2.